The chain runs to 774 residues: DNA ligase (774 aa).

NAD(+) contacts are provided by residues 36–40, 85–86, and Glu-161; these read DAVYD and SL. Lys-163 acts as the N6-AMP-lysine intermediate in catalysis. Arg-184, Glu-221, Lys-341, and Lys-365 together coordinate NAD(+). Residues Cys-459, Cys-462, Cys-477, and Cys-482 each coordinate Zn(2+). A BRCT domain is found at 693-774; sequence VQSGLLRGKT…LLEALAVTGI (82 aa).

Belongs to the NAD-dependent DNA ligase family. LigA subfamily. Requires Mg(2+) as cofactor. Mn(2+) serves as cofactor.

It catalyses the reaction NAD(+) + (deoxyribonucleotide)n-3'-hydroxyl + 5'-phospho-(deoxyribonucleotide)m = (deoxyribonucleotide)n+m + AMP + beta-nicotinamide D-nucleotide.. Its function is as follows. DNA ligase that catalyzes the formation of phosphodiester linkages between 5'-phosphoryl and 3'-hydroxyl groups in double-stranded DNA using NAD as a coenzyme and as the energy source for the reaction. It is essential for DNA replication and repair of damaged DNA. This chain is DNA ligase, found in Trichodesmium erythraeum (strain IMS101).